We begin with the raw amino-acid sequence, 204 residues long: B9 domain-containing protein 1 (204 aa).

One can recognise a C2 B9-type domain in the interval F9–T127. The tract at residues G182–Q204 is disordered.

It belongs to the B9D family. As to quaternary structure, part of the tectonic-like complex (also named B9 complex).

It is found in the cytoplasm. It localises to the cytoskeleton. The protein localises to the cilium basal body. Its subcellular location is the cilium axoneme. Component of the tectonic-like complex, a complex localized at the transition zone of primary cilia and acting as a barrier that prevents diffusion of transmembrane proteins between the cilia and plasma membranes. Required for ciliogenesis and sonic hedgehog/SHH signaling. This Homo sapiens (Human) protein is B9 domain-containing protein 1 (B9D1).